The following is a 757-amino-acid chain: Vitamin K-dependent gamma-carboxylase (757 aa).

Ala-2 is modified (N-acetylalanine). Over 2–60 the chain is Cytoplasmic; sequence AVHRGSALVAPASDKVQKNKSAQTSGLKQGSRMEKILGFEWTDLSSWQSVVTLLNKPTD. Residues 61–81 traverse the membrane as a helical segment; it reads PANLAVFRFLFAFLMLLDIPQ. Over 82–113 the chain is Lumenal; it reads ERGLSSLDRKYLDGLDVCRFPLLDALRPLPLD. A disulfide bond links Cys-99 and Cys-450. The chain crosses the membrane as a helical span at residues 114–134; the sequence is WMYLVYTIMFLGALGMMLGLC. Residues 135–136 lie on the Cytoplasmic side of the membrane; that stretch reads YR. Residues 137 to 157 traverse the membrane as a helical segment; the sequence is LSCVLFLLPYWYVFLLDKTSW. The Lumenal segment spans residues 158-292; that stretch reads NNHSYLYGLL…VSYFHCMNSQ (135 aa). The helical transmembrane segment at 293–313 threads the bilayer; it reads LFSIGMFPYVMLASSPLFCSA. At 314-361 the chain is on the cytoplasmic side; sequence EWPRKLVARCPKRLQELLPTKAAPRPSASCVYKRSRGKAGPKPGLRHQ. A helical membrane pass occupies residues 362 to 382; sequence LGAIFTLLYLLEQLFLPYSHF. Topologically, residues 383-757 are lumenal; it reads LTQGYNNWTN…PDSEHVHSEF (375 aa). Residues 729–757 form a disordered region; sequence EPVDESSASNTDSSNHPSEPDSEHVHSEF. Residues 734 to 745 are compositionally biased toward polar residues; it reads SSASNTDSSNHP. A compositionally biased stretch (basic and acidic residues) spans 746 to 757; sequence SEPDSEHVHSEF.

The protein belongs to the vitamin K-dependent gamma-carboxylase family. Monomer. May interact with CALU.

It localises to the endoplasmic reticulum membrane. It carries out the reaction 4-carboxy-L-glutamyl-[protein] + 2,3-epoxyphylloquinone + H2O + H(+) = phylloquinol + L-glutamyl-[protein] + CO2 + O2. In terms of biological role, mediates the vitamin K-dependent carboxylation of glutamate residues to calcium-binding gamma-carboxyglutamate (Gla) residues with the concomitant conversion of the reduced hydroquinone form of vitamin K to vitamin K epoxide. Catalyzes gamma-carboxylation of various proteins, such as blood coagulation factors (F2, F7, F9 and F10), osteocalcin (bglap and bglap2) or matrix Gla protein (MGP). In Mus musculus (Mouse), this protein is Vitamin K-dependent gamma-carboxylase (Ggcx).